We begin with the raw amino-acid sequence, 501 residues long: Lysine--tRNA ligase (501 aa).

Positions 402 and 409 each coordinate Mg(2+).

It belongs to the class-II aminoacyl-tRNA synthetase family. As to quaternary structure, homodimer. The cofactor is Mg(2+).

The protein localises to the cytoplasm. It catalyses the reaction tRNA(Lys) + L-lysine + ATP = L-lysyl-tRNA(Lys) + AMP + diphosphate. The protein is Lysine--tRNA ligase (lysS) of Helicobacter pylori (strain J99 / ATCC 700824) (Campylobacter pylori J99).